A 452-amino-acid polypeptide reads, in one-letter code: tRNA pseudouridine synthase Pus10 (452 aa).

The THUMP domain occupies 71–200 (EMLRALAPSC…DGHVEIQIQP (130 aa)). The active-site Nucleophile is Asp269. 2 residues coordinate substrate: Tyr335 and Tyr406.

The protein belongs to the pseudouridine synthase Pus10 family.

The enzyme catalyses uridine(54) in tRNA = pseudouridine(54) in tRNA. The catalysed reaction is uridine(55) in tRNA = pseudouridine(55) in tRNA. Functionally, responsible for synthesis of pseudouridine from uracil-54 and uracil-55 in the psi GC loop of transfer RNAs. In Methanothrix thermoacetophila (strain DSM 6194 / JCM 14653 / NBRC 101360 / PT) (Methanosaeta thermophila), this protein is tRNA pseudouridine synthase Pus10.